Here is a 521-residue protein sequence, read N- to C-terminus: uncharacterized protein (521 aa).

The interval 1-25 is disordered; that stretch reads MLQRSLGVNGRKLAMSARSAKRERK. 6 consecutive transmembrane segments (helical) span residues 68-88, 114-134, 160-180, 192-212, 290-310, and 399-419; these read GAVW…GAVL, VLIV…SLTV, VVLA…HTVG, VAVT…IYFL, ALLV…GWCW, and LLFW…CAQI.

It localises to the cell membrane. This is an uncharacterized protein from Mycobacterium bovis (strain ATCC BAA-935 / AF2122/97).